Here is a 145-residue protein sequence, read N- to C-terminus: D-aminoacyl-tRNA deacylase (145 aa).

The Gly-cisPro motif, important for rejection of L-amino acids signature appears at 137–138 (GP).

This sequence belongs to the DTD family. As to quaternary structure, homodimer.

It is found in the cytoplasm. It carries out the reaction glycyl-tRNA(Ala) + H2O = tRNA(Ala) + glycine + H(+). It catalyses the reaction a D-aminoacyl-tRNA + H2O = a tRNA + a D-alpha-amino acid + H(+). In terms of biological role, an aminoacyl-tRNA editing enzyme that deacylates mischarged D-aminoacyl-tRNAs. Also deacylates mischarged glycyl-tRNA(Ala), protecting cells against glycine mischarging by AlaRS. Acts via tRNA-based rather than protein-based catalysis; rejects L-amino acids rather than detecting D-amino acids in the active site. By recycling D-aminoacyl-tRNA to D-amino acids and free tRNA molecules, this enzyme counteracts the toxicity associated with the formation of D-aminoacyl-tRNA entities in vivo and helps enforce protein L-homochirality. This is D-aminoacyl-tRNA deacylase from Pseudomonas putida (strain ATCC 700007 / DSM 6899 / JCM 31910 / BCRC 17059 / LMG 24140 / F1).